A 91-amino-acid polypeptide reads, in one-letter code: MAENNKKSTAYIQRMRTLKFYQKMASARIPITVYLHDQREVKAEFGAIDSSESKLAVSNLQTDWGVINRAVIRTGDVVGIEYNLVQEEGEL.

The region spanning 18–86 (LKFYQKMASA…VVGIEYNLVQ (69 aa)) is the Sm domain.

Belongs to the gemin-7 family. As to quaternary structure, part of the core SMN complex at least composed of smn1, yip11/gem2, gem6, gem7 and gem8. Interacts with gem6; the interaction is direct. Interacts with gem8; the interaction is direct.

This chain is Gem-associated protein 7 homolog, found in Schizosaccharomyces pombe (strain 972 / ATCC 24843) (Fission yeast).